Here is a 637-residue protein sequence, read N- to C-terminus: tRNA uridine 5-carboxymethylaminomethyl modification enzyme MnmG (637 aa).

Position 14–19 (14–19 (GAGHAG)) interacts with FAD. Residue 279 to 293 (GPRYCPSIEDKVVRF) participates in NAD(+) binding.

This sequence belongs to the MnmG family. In terms of assembly, homodimer. Heterotetramer of two MnmE and two MnmG subunits. FAD serves as cofactor.

Its subcellular location is the cytoplasm. In terms of biological role, NAD-binding protein involved in the addition of a carboxymethylaminomethyl (cmnm) group at the wobble position (U34) of certain tRNAs, forming tRNA-cmnm(5)s(2)U34. This is tRNA uridine 5-carboxymethylaminomethyl modification enzyme MnmG from Desulfitobacterium hafniense (strain DSM 10664 / DCB-2).